The following is a 168-amino-acid chain: Ecotin (168 aa).

The first 21 residues, 1–21 (MKRLSIAITSLLMAASASTIA), serve as a signal peptide directing secretion. An intrachain disulfide couples Cys-76 to Cys-113.

This sequence belongs to the protease inhibitor I11 (ecotin) family. In terms of assembly, homodimer.

It localises to the periplasm. In terms of biological role, general inhibitor of pancreatic serine proteases: inhibits chymotrypsin, trypsin, elastases, factor X, kallikrein as well as a variety of other proteases. The chain is Ecotin from Yersinia enterocolitica serotype O:8 / biotype 1B (strain NCTC 13174 / 8081).